A 388-amino-acid polypeptide reads, in one-letter code: Succinate--CoA ligase [ADP-forming] subunit beta (388 aa).

Residues 9 to 245 enclose the ATP-grasp domain; that stretch reads KALLKEYGMP…KSQENERELK (237 aa). ATP is bound by residues Lys-46, 53 to 55, Glu-100, Tyr-103, and Glu-108; that span reads GRG. Mg(2+) contacts are provided by Asn-200 and Asp-214. Residues Asn-265 and 322–324 contribute to the substrate site; that span reads GIV.

The protein belongs to the succinate/malate CoA ligase beta subunit family. As to quaternary structure, heterotetramer of two alpha and two beta subunits. Mg(2+) serves as cofactor.

The catalysed reaction is succinate + ATP + CoA = succinyl-CoA + ADP + phosphate. It catalyses the reaction GTP + succinate + CoA = succinyl-CoA + GDP + phosphate. It participates in carbohydrate metabolism; tricarboxylic acid cycle; succinate from succinyl-CoA (ligase route): step 1/1. Its function is as follows. Succinyl-CoA synthetase functions in the citric acid cycle (TCA), coupling the hydrolysis of succinyl-CoA to the synthesis of either ATP or GTP and thus represents the only step of substrate-level phosphorylation in the TCA. The beta subunit provides nucleotide specificity of the enzyme and binds the substrate succinate, while the binding sites for coenzyme A and phosphate are found in the alpha subunit. This is Succinate--CoA ligase [ADP-forming] subunit beta from Acinetobacter baumannii (strain AB307-0294).